The following is a 107-amino-acid chain: Phosphoribosyl-ATP pyrophosphatase (107 aa).

The protein belongs to the PRA-PH family.

It is found in the cytoplasm. It carries out the reaction 1-(5-phospho-beta-D-ribosyl)-ATP + H2O = 1-(5-phospho-beta-D-ribosyl)-5'-AMP + diphosphate + H(+). It functions in the pathway amino-acid biosynthesis; L-histidine biosynthesis; L-histidine from 5-phospho-alpha-D-ribose 1-diphosphate: step 2/9. The protein is Phosphoribosyl-ATP pyrophosphatase of Bacillus cereus (strain Q1).